Here is a 163-residue protein sequence, read N- to C-terminus: Cytochrome c-type biogenesis protein CcmE (163 aa).

Residues 1-7 lie on the Cytoplasmic side of the membrane; it reads MTRKQRR. Residues 8 to 28 traverse the membrane as a helical; Signal-anchor for type II membrane protein segment; sequence LVFIGTCGAVLAVALGLVLWA. Residues 29-163 are Periplasmic-facing; it reads MSGTIVFFRS…RTASGEARAP (135 aa). The heme site is built by H122 and Y126. The disordered stretch occupies residues 134–163; that stretch reads ALKKSGRWQEGAGHPAPAPPRTASGEARAP.

This sequence belongs to the CcmE/CycJ family.

The protein resides in the cell inner membrane. Functionally, heme chaperone required for the biogenesis of c-type cytochromes. Transiently binds heme delivered by CcmC and transfers the heme to apo-cytochromes in a process facilitated by CcmF and CcmH. The sequence is that of Cytochrome c-type biogenesis protein CcmE from Methylobacterium sp. (strain 4-46).